The primary structure comprises 314 residues: Olfactory receptor 51I1 (314 aa).

Topologically, residues 1 to 27 (MLGLNGTPFQPATLQLTGIPGIQTGLT) are extracellular. A helical membrane pass occupies residues 28 to 48 (WVALIFCILYMISIVGNLSIL). Residues 49-56 (TLVFWEPA) are Cytoplasmic-facing. Residues 57 to 77 (LHQPMYYFLSMLALNDLGVSF) form a helical membrane-spanning segment. The Extracellular portion of the chain corresponds to 78-101 (STLPTVISTFCFNYNHVAFNACLV). Cys99 and Cys191 are oxidised to a cystine. The helical transmembrane segment at 102 to 122 (QMFFIHTFSFMESGILLAMSL) threads the bilayer. At 123 to 141 (DRFVAICYPLRYVTVLTHN) the chain is on the cytoplasmic side. Residues 142-162 (RILAMGLGILTKSFTTLFPFP) form a helical membrane-spanning segment. At 163–198 (FVVKRLPFCKGNVLHHSYCLHPDLMKVACGDIHVNN) the chain is on the extracellular side. Residues 199–219 (IYGLLVIIFTYGMDSTFILLS) form a helical membrane-spanning segment. Over 220–239 (YALILRAMLVIISQEQRLKA) the chain is Cytoplasmic. The chain crosses the membrane as a helical span at residues 240–260 (LNTCMSHICAVLAFYVPIIAV). Over 261–275 (SMIHRFWKSAPPVVH) the chain is Extracellular. Residues 276 to 296 (VMMSNVYLFVPPMLNPIIYSV) traverse the membrane as a helical segment. At 297-314 (KTKEIRKGILKFFHKSQA) the chain is on the cytoplasmic side.

It belongs to the G-protein coupled receptor 1 family.

Its subcellular location is the cell membrane. Functionally, odorant receptor. The polypeptide is Olfactory receptor 51I1 (OR51I1) (Homo sapiens (Human)).